A 2185-amino-acid polypeptide reads, in one-letter code: DNA polymerase epsilon catalytic subunit A (2185 aa).

Zn(2+)-binding residues include C2072, C2075, C2094, and C2097. A CysA-type zinc finger spans residues 2072-2097 (CEHCSYISDIDICRESMERVFICQSC). Positions 2128, 2131, 2143, and 2145 each coordinate [4Fe-4S] cluster. The CysB motif signature appears at 2128 to 2145 (CNKCHKIKEDAMSPYCPC).

Belongs to the DNA polymerase type-B family. Heterotetramer. Consists of 4 subunits: POL2, DPB2, DPB3 and DPB4. Requires [4Fe-4S] cluster as cofactor.

The protein resides in the nucleus. The catalysed reaction is DNA(n) + a 2'-deoxyribonucleoside 5'-triphosphate = DNA(n+1) + diphosphate. DNA polymerase II participates in chromosomal DNA replication. The protein is DNA polymerase epsilon catalytic subunit A (POL2) of Kluyveromyces lactis (strain ATCC 8585 / CBS 2359 / DSM 70799 / NBRC 1267 / NRRL Y-1140 / WM37) (Yeast).